A 207-amino-acid chain; its full sequence is Alpha-1-acid glycoprotein 1 (207 aa).

An N-terminal signal peptide occupies residues Met-1–Ala-18. Residue Gln-19 is modified to Pyrrolidone carboxylic acid. Asn-25, Asn-34, Asn-76, Asn-94, and Asn-104 each carry an N-linked (GlcNAc...) asparagine glycan. A disulfide bond links Cys-91 and Cys-184.

Belongs to the calycin superfamily. Lipocalin family.

The protein resides in the secreted. Functionally, functions as a transport protein in the blood stream. Binds various ligands in the interior of its beta-barrel domain. Appears to function in modulating the activity of the immune system during the acute-phase reaction. This chain is Alpha-1-acid glycoprotein 1 (Orm1), found in Mus musculus (Mouse).